Here is a 173-residue protein sequence, read N- to C-terminus: uncharacterized protein (173 aa).

Residues 1-21 form a helical membrane-spanning segment; the sequence is MFIVFYLILIIFIFIYFHVYI.

This sequence to T.pallidum TP0711.

It localises to the membrane. This is an uncharacterized protein from Borreliella burgdorferi (strain ATCC 35210 / DSM 4680 / CIP 102532 / B31) (Borrelia burgdorferi).